The primary structure comprises 130 residues: C-type natriuretic peptide 2 (130 aa).

The first 22 residues, 1-22 (MAASSSSFVPLVLLFLAIPVEP), serve as a signal peptide directing secretion. A propeptide spanning residues 23–103 (RPSMTRDEAQ…LQQQSKTTRR (81 aa)) is cleaved from the precursor. Positions 57 to 77 (ELLPRRPGPPRSFGASPGALR) are disordered. Cysteines 114 and 130 form a disulfide.

This sequence belongs to the natriuretic peptide family.

It localises to the secreted. In terms of biological role, exhibits natriuretic and vasodepressant activity. Has cGMP-stimulating activity. May help to regulate body fluid homeostasis in a variety of aquatic environments. This Takifugu rubripes (Japanese pufferfish) protein is C-type natriuretic peptide 2.